The following is a 219-amino-acid chain: EP300-interacting inhibitor of differentiation 2 (219 aa).

Residues methionine 1–methionine 71 are disordered. Residues glycine 20–proline 34 are compositionally biased toward basic and acidic residues. Omega-N-methylarginine is present on arginine 75. Positions alanine 95 to proline 115 are disordered.

Heterodimer with EID2B. Interacts with the C-terminus of EP300. Interacts with HDAC1 and HDAC2. Interacts with SMAD2, SMAD4 and with the MH2 domain of SMAD3.

The protein localises to the nucleus. Its function is as follows. Interacts with EP300 and acts as a repressor of MYOD-dependent transcription and muscle differentiation. Inhibits EP300 histone acetyltransferase activity. Acts as a repressor of TGFB/SMAD transcriptional responses. May act as a repressor of the TGFB/SMAD3-dependent signaling by selectively blocking formation of TGFB-induced SMAD3-SMAD4 complex. This Bos taurus (Bovine) protein is EP300-interacting inhibitor of differentiation 2.